We begin with the raw amino-acid sequence, 156 residues long: CASP-like protein 5C1 (156 aa).

Topologically, residues 1 to 24 (MENRERAGAGAVGSAGSLGLRVEQ) are cytoplasmic. The chain crosses the membrane as a helical span at residues 25–45 (AVFSSASLLFMSVGVEFFSYT). A topological domain (extracellular) is located at residue A46. A helical transmembrane segment spans residues 47 to 67 (FCFLVTIMGLVIPWSCTLAMI). Residues 68-81 (DVYSILVGCPLRVP) are Cytoplasmic-facing. The chain crosses the membrane as a helical span at residues 82 to 102 (GVMVIVVIGDWVLAILSLAAA). At 103–132 (SSSAAVIDLLLQFHGSHCSPRFCGRYQLSA) the chain is on the extracellular side. Residues 133 to 153 (MMAFLSWFLTAASSLFNLWFI) form a helical membrane-spanning segment. Over 154-156 (ASR) the chain is Cytoplasmic.

The protein belongs to the Casparian strip membrane proteins (CASP) family. As to quaternary structure, homodimer and heterodimers.

It localises to the cell membrane. The sequence is that of CASP-like protein 5C1 from Oryza sativa subsp. indica (Rice).